Here is a 196-residue protein sequence, read N- to C-terminus: Probable malonic semialdehyde reductase RutE (196 aa).

The protein belongs to the nitroreductase family. HadB/RutE subfamily. The cofactor is FMN.

The catalysed reaction is 3-hydroxypropanoate + NADP(+) = 3-oxopropanoate + NADPH + H(+). Functionally, may reduce toxic product malonic semialdehyde to 3-hydroxypropionic acid, which is excreted. The polypeptide is Probable malonic semialdehyde reductase RutE (Yersinia enterocolitica serotype O:8 / biotype 1B (strain NCTC 13174 / 8081)).